Consider the following 477-residue polypeptide: Metallopeptidase AprA (477 aa).

Positions 1–20 (MSKAKDKAIVSAAQASTAYS) are cleaved as a signal peptide. Zn(2+) is bound at residue histidine 183. Residue glutamate 184 is part of the active site. The Zn(2+) site is built by histidine 187 and histidine 193. Ca(2+) is bound by residues arginine 264, glycine 266, threonine 268, aspartate 296, glycine 298, glycine 299, aspartate 301, threonine 338, glutamate 340, glycine 345, glycine 347, aspartate 349, asparagine 354, alanine 356, asparagine 358, glycine 362, glycine 363, alanine 364, glycine 365, aspartate 367, glycine 371, alanine 372, glycine 373, glycine 374, aspartate 376, glycine 380, glycine 381, alanine 382, glycine 383, aspartate 385, aspartate 394, aspartate 401, aspartate 411, aspartate 453, serine 455, and aspartate 461. Hemolysin-type calcium-binding repeat units lie at residues 343 to 360 (FGGA…ANVI), 361 to 378 (KGGA…ADQL), and 379 to 391 (WGGA…VFGA).

The protein belongs to the peptidase M10B family. It depends on Ca(2+) as a cofactor. Zn(2+) serves as cofactor.

The protein resides in the secreted. Its activity is regulated as follows. Is completely inhibited by the metal cation chelators 1,10-phenanthroline and EDTA, but PMSF, pepstatin A and E-64 have no effect on activity. Functionally, peptidase able to cleave azocasein and the milk substrates beta-casein and Na-caseinate. Can withstand UHT processing of milk, and is able to spoil UHT milk over the storage period. In Pseudomonas marginalis (Pseudomonas panacis), this protein is Metallopeptidase AprA.